Here is a 254-residue protein sequence, read N- to C-terminus: Large ribosomal subunit protein uL2 (254 aa).

The protein belongs to the universal ribosomal protein uL2 family.

The sequence is that of Large ribosomal subunit protein uL2 (RPL2) from Candida glabrata (strain ATCC 2001 / BCRC 20586 / JCM 3761 / NBRC 0622 / NRRL Y-65 / CBS 138) (Yeast).